The sequence spans 173 residues: Peptide deformylase (173 aa).

Cys98 and His140 together coordinate Fe cation. Glu141 is a catalytic residue. His144 provides a ligand contact to Fe cation.

It belongs to the polypeptide deformylase family. It depends on Fe(2+) as a cofactor.

It catalyses the reaction N-terminal N-formyl-L-methionyl-[peptide] + H2O = N-terminal L-methionyl-[peptide] + formate. Functionally, removes the formyl group from the N-terminal Met of newly synthesized proteins. Requires at least a dipeptide for an efficient rate of reaction. N-terminal L-methionine is a prerequisite for activity but the enzyme has broad specificity at other positions. The chain is Peptide deformylase from Caulobacter vibrioides (strain ATCC 19089 / CIP 103742 / CB 15) (Caulobacter crescentus).